A 138-amino-acid polypeptide reads, in one-letter code: Nucleoside diphosphate kinase (138 aa).

Lys-9, Phe-57, Arg-85, Thr-91, Arg-102, and Asn-112 together coordinate ATP. His-115 (pros-phosphohistidine intermediate) is an active-site residue.

Belongs to the NDK family. As to quaternary structure, homotetramer. The cofactor is Mg(2+).

It localises to the cytoplasm. The catalysed reaction is a 2'-deoxyribonucleoside 5'-diphosphate + ATP = a 2'-deoxyribonucleoside 5'-triphosphate + ADP. The enzyme catalyses a ribonucleoside 5'-diphosphate + ATP = a ribonucleoside 5'-triphosphate + ADP. In terms of biological role, major role in the synthesis of nucleoside triphosphates other than ATP. The ATP gamma phosphate is transferred to the NDP beta phosphate via a ping-pong mechanism, using a phosphorylated active-site intermediate. The sequence is that of Nucleoside diphosphate kinase from Lawsonia intracellularis (strain PHE/MN1-00).